A 582-amino-acid chain; its full sequence is Protein NARROW LEAF 1 (582 aa).

2 disordered regions span residues 1 to 26 (MKPS…VDHQ) and 531 to 582 (GMSP…DLEK). A compositionally biased stretch (basic and acidic residues) spans 562–572 (LGDREPKRLRS). The Nuclear localization signal signature appears at 567-573 (PKRLRSD). Over residues 573 to 582 (DSGSSLDLEK) the composition is skewed to low complexity.

As to expression, expressed in leaf sheaths, leaf blades, culms and panicles. Preferentially expressed in vascular tissues in leaves and culms.

It localises to the nucleus. The protein localises to the nucleoplasm. Its subcellular location is the cytoplasm. Its function is as follows. Involved in the regulation of lateral leaf growth. May be involved in the regulation of basipetal polar auxin transport (PAT) and vascular patterning in leaves. Controls photosynthesis rate by regulating carboxylation efficiency and consequently photosynthesis rate. Controls panicle and spikelet numbers, and grain yield. In Oryza sativa subsp. japonica (Rice), this protein is Protein NARROW LEAF 1.